Reading from the N-terminus, the 434-residue chain is 3-ketoacyl-CoA thiolase A, peroxisomal (434 aa).

A peroxisome-targeting transit peptide spans 1-36 (MSESVGRTSAMHRLQVVLGHLAGRPESSSALQAAPC). Residues 11-36 (MHRLQVVLGHLAGRPESSSALQAAPC) form a PTS2-type peroxisomal targeting signal region. Cys-133 serves as the catalytic Acyl-thioester intermediate. 2 positions are modified to N6-acetyllysine: Lys-183 and Lys-244. Catalysis depends on proton acceptor residues His-387 and Cys-418.

Belongs to the thiolase-like superfamily. Thiolase family. In terms of assembly, homodimer. Interacts (via PTS2-type peroxisomal targeting signal region) with PEX7; leading to its translocation into peroxisomes.

The protein resides in the peroxisome. It catalyses the reaction an acyl-CoA + acetyl-CoA = a 3-oxoacyl-CoA + CoA. The catalysed reaction is 2 acetyl-CoA = acetoacetyl-CoA + CoA. It carries out the reaction tetradecanoyl-CoA + acetyl-CoA = 3-oxohexadecanoyl-CoA + CoA. The enzyme catalyses hexanoyl-CoA + acetyl-CoA = 3-oxooctanoyl-CoA + CoA. It catalyses the reaction 3-oxohexadecanedioyl-CoA + CoA = tetradecanedioyl-CoA + acetyl-CoA. The catalysed reaction is 3-oxo-(6Z,9Z,12Z,15Z,18Z,21Z)-tetracosahexaenoyl-CoA + CoA = (4Z,7Z,10Z,13Z,16Z,19Z)-docosahexaenoyl-CoA + acetyl-CoA. It participates in lipid metabolism; peroxisomal fatty acid beta-oxidation. Functionally, responsible for the thiolytic cleavage of straight chain 3-keto fatty acyl-CoAs (3-oxoacyl-CoAs). Plays an important role in fatty acid peroxisomal beta-oxidation. Catalyzes the cleavage of short, medium, long, and very long straight chain 3-oxoacyl-CoAs. Medium chain straight 3-oxoacyl-CoAs are preferred substrates. The protein is 3-ketoacyl-CoA thiolase A, peroxisomal of Rattus norvegicus (Rat).